The following is a 267-amino-acid chain: tRNA pseudouridine synthase A (267 aa).

The active-site Nucleophile is Asp51. Residue Tyr109 participates in substrate binding.

The protein belongs to the tRNA pseudouridine synthase TruA family. Homodimer.

It carries out the reaction uridine(38/39/40) in tRNA = pseudouridine(38/39/40) in tRNA. Functionally, formation of pseudouridine at positions 38, 39 and 40 in the anticodon stem and loop of transfer RNAs. The sequence is that of tRNA pseudouridine synthase A from Staphylococcus aureus (strain bovine RF122 / ET3-1).